We begin with the raw amino-acid sequence, 67 residues long: Small ribosomal subunit protein bS21 (67 aa).

This sequence belongs to the bacterial ribosomal protein bS21 family.

The polypeptide is Small ribosomal subunit protein bS21 (rpsU) (Aquifex aeolicus (strain VF5)).